Here is a 534-residue protein sequence, read N- to C-terminus: MATALMAVVLRAAAVAPRLRGRGGTGGARRLSCGARRRAARGTSPGRRLSTAWSQPQPPPEEYAGADDVSQSPVAEEPSWVPSPRPPVPHESPEPPSGRSLVQRDIQAFLNQCGASPGEARHWLTQFQTCHHSADKPFAVIEVDEEVLKCQQGVSSLAFALAFLQRMDMKPLVVLGLPAPTAPSGCLSFWEAKAQLAKSCKVLVDALRHNAAAAVPFFGGGSVLRAAEPAPHASYGGIVSVETDLLQWCLESGSIPILCPIGETAARRSVLLDSLEVTASLAKALRPTKIIFLNNTGGLRDSSHKVLSNVNLPADLDLVCNAEWVSTKERQQMRLIVDVLSRLPHHSSAVITAASTLLTELFSNKGSGTLFKNAERMLRVRSLDKLDQGRLVDLVNASFGKKLRDDYLASLRPRLHSIYVSEGYNAAAILTMEPVLGGTPYLDKFVVSSSRQGQGSGQMLWECLRRDLQTLFWRSRVTNPINPWYFKHSDGSFSNKQWIFFWFGLADIRDSYELVNHAKGLPDSFHKPASDPGS.

The N-terminal 18 residues, 1–18, are a transit peptide targeting the mitochondrion; that stretch reads MATALMAVVLRAAAVAPR. A disordered region spans residues 19 to 99; sequence LRGRGGTGGA…HESPEPPSGR (81 aa). Residues 19-376 are amino-acid kinase domain (AAK); sequence LRGRGGTGGA…SGTLFKNAER (358 aa). Residues 81 to 96 are compositionally biased toward pro residues; that stretch reads VPSPRPPVPHESPEPP. Positions 375-526 constitute an N-acetyltransferase domain; that stretch reads ERMLRVRSLD…HAKGLPDSFH (152 aa). Substrate contacts are provided by residues lysine 401, lysine 444, and 474–479; that span reads RSRVTN.

It belongs to the acetyltransferase family. As to quaternary structure, homodimer. Homotetramer. Probably processed by mitochondrial processing peptidase (MPP). The long form has not yet been isolated. In terms of tissue distribution, highly expressed in the adult liver, kidney and small intestine. Weakly expressed in the fetal liver, lung, pancreas, placenta, heart and brain tissue.

It localises to the mitochondrion matrix. It catalyses the reaction L-glutamate + acetyl-CoA = N-acetyl-L-glutamate + CoA + H(+). It participates in amino-acid biosynthesis; L-arginine biosynthesis; N(2)-acetyl-L-ornithine from L-glutamate: step 1/4. With respect to regulation, increased by L-arginine. Plays a role in the regulation of ureagenesis by producing the essential cofactor N-acetylglutamate (NAG), thus modulating carbamoylphosphate synthase I (CPS1) activity. The chain is N-acetylglutamate synthase, mitochondrial (NAGS) from Homo sapiens (Human).